Here is a 228-residue protein sequence, read N- to C-terminus: Protein 33K (228 aa).

The segment at 1–156 (MAPKKKLQLP…GALRLAPNEP (156 aa)) is disordered. The segment covering 15 to 53 (TDEEEYWDSQAEEVLDEEEEMMEDWDSLDEASEAEEVSD) has biased composition (acidic residues). 2 stretches are compositionally biased toward low complexity: residues 54-63 (ETPSPSVAFP) and 104-119 (AAPT…ATAA). A necessary for nuclear subcellular location region spans residues 171-198 (YAIFQQSRGQEQELKIKNRSLRSLTRSC). The interval 177 to 197 (SRGQEQELKIKNRSLRSLTRS) is RS-repeat; required for splicing enhancer activity.

Belongs to the adenoviridae splicing factor family. Homooligomer. Interacts with DBP; this interaction occurs at a unique vertex during genome packaging. Interacts with IVa2; this interaction occurs at a unique vertex during genome packaging and seems to potentiate IVa2 and 33K oligomerization. Post-translationally, phosphorylated in vitro by human PKA and PRKDC. PRKDC inhibits, whereas PKA activates the splicing factor.

The protein resides in the host nucleus. Its function is as follows. Promotes alternative splicing of late transcripts by promoting splicing at weak 3' splice sites. Required for the temporal activation of major late pre-mRNA splicing at late times of infection. Induces the splicing and expression of the late capsid vertex protein. In terms of biological role, probably functions as the small terminase that is part of the molecular motor that translocates genomic DNA in empty capsid during DNA packaging. This motor is located at a unique vertex and comprises at least the IVa2 ATPase, the small terminase 33K and probably a portal. Forms a ring-like structure of about 17 nm in which genomic DNA is translocated into the capsid. Stimulates IVa2 ATPase activity in the presence of the viral genome. Once the DNA is packaged, the terminase detaches: the 33K protein is present in the empty particles, but not in the mature virions. Also involved in virion assembly. The chain is Protein 33K from Homo sapiens (Human).